We begin with the raw amino-acid sequence, 529 residues long: ADP,ATP carrier protein 1 (529 aa).

12 consecutive transmembrane segments (helical) span residues 24-44, 63-83, 93-113, 124-144, 149-169, 184-204, 220-240, 284-304, 322-342, 356-376, 381-401, and 463-483; these read LKKV…YTIL, IPFI…LIYA, ALFY…PLVI, DFAD…IAML, FAAF…LMFW, FYAL…PAIV, WGVT…IIAA, YMLL…LVEV, AFMG…MLFI, ALVT…LVIF, TGLV…VGAV, and ISAM…VWLT. Over residues 509–520 the composition is skewed to low complexity; it reads AAEKEASPAAKE. Positions 509-529 are disordered; the sequence is AAEKEASPAAKEVSPAIEGVS.

Belongs to the ADP/ATP translocase tlc family.

It is found in the cell membrane. In Chlamydia muridarum (strain MoPn / Nigg), this protein is ADP,ATP carrier protein 1 (tlcA).